A 338-amino-acid chain; its full sequence is Probable arabinan endo-1,5-alpha-L-arabinosidase A (338 aa).

The first 20 residues, Met-1 to Ala-20, serve as a signal peptide directing secretion. The active-site Proton acceptor is Asp-33. Glu-217 (proton donor) is an active-site residue.

The protein belongs to the glycosyl hydrolase 43 family.

The protein resides in the secreted. It catalyses the reaction Endohydrolysis of (1-&gt;5)-alpha-arabinofuranosidic linkages in (1-&gt;5)-arabinans.. It participates in glycan metabolism; L-arabinan degradation. Its function is as follows. Endo-1,5-alpha-L-arabinanase involved in degradation of pectin. Its preferred substrate is linear 1,5-alpha-L-arabinan. The sequence is that of Probable arabinan endo-1,5-alpha-L-arabinosidase A (abnA) from Aspergillus terreus (strain NIH 2624 / FGSC A1156).